The chain runs to 161 residues: 6,7-dimethyl-8-ribityllumazine synthase (161 aa).

Residues Phe23, 61–63 (SFE), and 85–87 (AVI) each bind 5-amino-6-(D-ribitylamino)uracil. A (2S)-2-hydroxy-3-oxobutyl phosphate-binding site is contributed by 90-91 (DT). His93 acts as the Proton donor in catalysis. Phe118 lines the 5-amino-6-(D-ribitylamino)uracil pocket. Arg132 contributes to the (2S)-2-hydroxy-3-oxobutyl phosphate binding site.

The protein belongs to the DMRL synthase family.

It catalyses the reaction (2S)-2-hydroxy-3-oxobutyl phosphate + 5-amino-6-(D-ribitylamino)uracil = 6,7-dimethyl-8-(1-D-ribityl)lumazine + phosphate + 2 H2O + H(+). It functions in the pathway cofactor biosynthesis; riboflavin biosynthesis; riboflavin from 2-hydroxy-3-oxobutyl phosphate and 5-amino-6-(D-ribitylamino)uracil: step 1/2. In terms of biological role, catalyzes the formation of 6,7-dimethyl-8-ribityllumazine by condensation of 5-amino-6-(D-ribitylamino)uracil with 3,4-dihydroxy-2-butanone 4-phosphate. This is the penultimate step in the biosynthesis of riboflavin. The sequence is that of 6,7-dimethyl-8-ribityllumazine synthase from Synechococcus sp. (strain WH7803).